We begin with the raw amino-acid sequence, 466 residues long: Asparagine--tRNA ligase (466 aa).

The protein belongs to the class-II aminoacyl-tRNA synthetase family. In terms of assembly, homodimer.

The protein localises to the cytoplasm. The enzyme catalyses tRNA(Asn) + L-asparagine + ATP = L-asparaginyl-tRNA(Asn) + AMP + diphosphate + H(+). This is Asparagine--tRNA ligase from Shewanella baltica (strain OS185).